The following is a 296-amino-acid chain: UDP-N-acetylenolpyruvoylglucosamine reductase (296 aa).

An FAD-binding PCMH-type domain is found at 26 to 191 (RIGGPANYFK…LSATFRLSKS (166 aa)). The active site involves Arg-170. The Proton donor role is filled by Cys-218. The active site involves Glu-287.

The protein belongs to the MurB family. FAD is required as a cofactor.

The protein localises to the cytoplasm. The catalysed reaction is UDP-N-acetyl-alpha-D-muramate + NADP(+) = UDP-N-acetyl-3-O-(1-carboxyvinyl)-alpha-D-glucosamine + NADPH + H(+). Its pathway is cell wall biogenesis; peptidoglycan biosynthesis. Cell wall formation. The chain is UDP-N-acetylenolpyruvoylglucosamine reductase from Chlamydia felis (strain Fe/C-56) (Chlamydophila felis).